Consider the following 71-residue polypeptide: Small ribosomal subunit protein bS21 (71 aa).

The protein belongs to the bacterial ribosomal protein bS21 family.

The protein is Small ribosomal subunit protein bS21 of Pseudoalteromonas atlantica (strain T6c / ATCC BAA-1087).